Consider the following 153-residue polypeptide: ORM1-like protein 2 (153 aa).

Residues 1–21 are Cytoplasmic-facing; that stretch reads MNVGVAHSEVNPNTRVMNSRG. 2 helical membrane-spanning segments follow: residues 22–42 and 43–63; these read IWLAYIILVGLLHVVLLSIPF and FSIPVVWTLTNVIHNLVMYVF. Topologically, residues 64 to 105 are cytoplasmic; the sequence is LHTVKGTPFETPDQGKARLLTHWEQMDYGLQFTSSRKFLSIS. A helical transmembrane segment spans residues 106 to 126; it reads PIVLYLLASFYTKYDAAHFLI. The Extracellular portion of the chain corresponds to 127–153; that stretch reads NTASLLSVLLPKLPQFHGVRLFGINKY.

It belongs to the ORM family. In terms of assembly, ceramide-sensitive subunit of the serine palmitoyltransferase (SPT) complex, which is also composed of SPTLC1, SPTLC2/3 and SPTSSA/B.

Its subcellular location is the endoplasmic reticulum membrane. Functionally, plays an essential role in the homeostatic regulation of sphingolipid de novo biosynthesis by modulating the activity of the serine palmitoyltransferase (SPT) in response to ceramide levels. When complexed to SPT, the binding of ceramides to its N-terminus stabilizes a conformation that block SPT substrate entry, hence preventing SPT catalytic activity. Through this mechanism, maintains ceramide levels at sufficient concentrations for the production of complex sphingolipids, but which prevents the accumulation of ceramides to levels that trigger apoptosis. The polypeptide is ORM1-like protein 2 (ORMDL2) (Bos taurus (Bovine)).